The primary structure comprises 149 residues: Flavodoxin YqcA (149 aa).

A Flavodoxin-like domain is found at 4-145 (IGIFVGTMYG…ESNPWVEQWG (142 aa)). Residues 10–15 (TMYGNS) and 99–101 (NFC) each bind FMN.

It belongs to the flavodoxin family. MioC subfamily. As to quaternary structure, monomer. It depends on FMN as a cofactor.

In terms of biological role, probable electron transporter. The chain is Flavodoxin YqcA (yqcA) from Escherichia coli (strain K12).